Reading from the N-terminus, the 176-residue chain is Ribosome rescue factor SmrB (176 aa).

The Smr domain maps to 98-173 (LDLHGLTQMQ…GTAAILLLVE (76 aa)).

Belongs to the SmrB family. As to quaternary structure, associates with collided ribosomes, but not with correctly translating polysomes.

Functionally, acts as a ribosome collision sensor. Detects stalled/collided disomes (pairs of ribosomes where the leading ribosome is stalled and a second ribosome has collided with it) and endonucleolytically cleaves mRNA at the 5' boundary of the stalled ribosome. Stalled/collided disomes form a new interface (primarily via the 30S subunits) that binds SmrB. Cleaved mRNA becomes available for tmRNA ligation, leading to ribosomal subunit dissociation and rescue of stalled ribosomes. The protein is Ribosome rescue factor SmrB of Serratia proteamaculans (strain 568).